Reading from the N-terminus, the 302-residue chain is 33 kDa chaperonin (302 aa).

Intrachain disulfides connect Cys234–Cys236 and Cys267–Cys270.

It belongs to the HSP33 family. In terms of processing, under oxidizing conditions two disulfide bonds are formed involving the reactive cysteines. Under reducing conditions zinc is bound to the reactive cysteines and the protein is inactive.

The protein resides in the cytoplasm. In terms of biological role, redox regulated molecular chaperone. Protects both thermally unfolding and oxidatively damaged proteins from irreversible aggregation. Plays an important role in the bacterial defense system toward oxidative stress. This Neisseria gonorrhoeae (strain NCCP11945) protein is 33 kDa chaperonin.